Here is a 207-residue protein sequence, read N- to C-terminus: V-type ATP synthase subunit D (207 aa).

It belongs to the V-ATPase D subunit family.

Functionally, produces ATP from ADP in the presence of a proton gradient across the membrane. This Streptococcus gordonii (strain Challis / ATCC 35105 / BCRC 15272 / CH1 / DL1 / V288) protein is V-type ATP synthase subunit D.